We begin with the raw amino-acid sequence, 150 residues long: SsrA-binding protein (150 aa).

This sequence belongs to the SmpB family.

The protein localises to the cytoplasm. In terms of biological role, required for rescue of stalled ribosomes mediated by trans-translation. Binds to transfer-messenger RNA (tmRNA), required for stable association of tmRNA with ribosomes. tmRNA and SmpB together mimic tRNA shape, replacing the anticodon stem-loop with SmpB. tmRNA is encoded by the ssrA gene; the 2 termini fold to resemble tRNA(Ala) and it encodes a 'tag peptide', a short internal open reading frame. During trans-translation Ala-aminoacylated tmRNA acts like a tRNA, entering the A-site of stalled ribosomes, displacing the stalled mRNA. The ribosome then switches to translate the ORF on the tmRNA; the nascent peptide is terminated with the 'tag peptide' encoded by the tmRNA and targeted for degradation. The ribosome is freed to recommence translation, which seems to be the essential function of trans-translation. The chain is SsrA-binding protein from Thermotoga maritima (strain ATCC 43589 / DSM 3109 / JCM 10099 / NBRC 100826 / MSB8).